Reading from the N-terminus, the 103-residue chain is MTGRGKGGKGLGKGGAKRHRKVLRDNIQGITKPAIRRLARRGGVKRISGLIYEETRGVLKVFLENVIRDAVTYTEHAKRKTVTAMDVVYALKRXXXTLYGFGG.

The segment covering Met-1–Gly-14 has biased composition (gly residues). The tract at residues Met-1 to Arg-20 is disordered. Thr-2 is modified (N-acetylthreonine). Position 6 is an N6-acetyl-N6-methyllysine; alternate (Lys-6). N6-acetyllysine is present on residues Lys-6, Lys-9, Lys-13, and Lys-17. Lys-13 carries the N6-acetyl-N6-methyllysine; alternate modification. Lys-21 is subject to N6,N6-dimethyllysine. At Lys-32 the chain carries N6-methyllysine.

The protein belongs to the histone H4 family. As to quaternary structure, the nucleosome is a histone octamer containing two molecules each of H2A, H2B, H3 and H4 assembled in one H3-H4 heterotetramer and two H2A-H2B heterodimers. The octamer wraps approximately 147 bp of DNA.

It localises to the nucleus. The protein resides in the chromosome. Its function is as follows. Core component of nucleosome. Nucleosomes wrap and compact DNA into chromatin, limiting DNA accessibility to the cellular machineries which require DNA as a template. Histones thereby play a central role in transcription regulation, DNA repair, DNA replication and chromosomal stability. DNA accessibility is regulated via a complex set of post-translational modifications of histones, also called histone code, and nucleosome remodeling. Functionally, a mixture of histones H2B and H4 has antimicrobial activity against the Gram-positive bacterium M.luteus. The polypeptide is Histone H4 (Penaeus vannamei (Whiteleg shrimp)).